Here is a 325-residue protein sequence, read N- to C-terminus: Melanocortin receptor 5 (325 aa).

At 1-37 (MNSSFHLHFLDLNLNATEGNLSGPNVKNKSSPCEDMG) the chain is on the extracellular side. Residues asparagine 2, asparagine 15, asparagine 20, and asparagine 28 are each glycosylated (N-linked (GlcNAc...) asparagine). Residues 38 to 61 (IAVEVFLTLGVISLLENILVIGAI) traverse the membrane as a helical segment. Residues 62–73 (VKNKNLHSPMYF) lie on the Cytoplasmic side of the membrane. Residues 74–97 (FVCSLAVADMLVSMSSAWETITIY) traverse the membrane as a helical segment. Residues 98–114 (LLNNKHLVIADAFVRHI) lie on the Extracellular side of the membrane. The chain crosses the membrane as a helical span at residues 115–138 (DNVFDSMICISVVASMCSLLAIAV). Over 139 to 155 (DRYVTIFYALRYHHIMT) the chain is Cytoplasmic. The chain crosses the membrane as a helical span at residues 156-179 (ARRSGAIIAGIWAFCTGCGIVFIL). Topologically, residues 180-186 (YSESTYV) are extracellular. The chain crosses the membrane as a helical span at residues 187-211 (ILCLISMFFAMLFLLVSLYIHMFLL). At 212 to 239 (ARTHVKRIAALPGASSARQRTSMQGAVT) the chain is on the cytoplasmic side. A helical transmembrane segment spans residues 240-265 (VTMLLGVFTVCWAPFFLHLTLMLSCP). Topologically, residues 266-273 (QNLYCSRF) are extracellular. Residues 274-297 (MSHFNMYLILIMCNSVMDPLIYAF) form a helical membrane-spanning segment. The Cytoplasmic segment spans residues 298–325 (RSQEMRKTFKEIICCRGFRIACSFPRRD). Residues cysteine 311 and cysteine 312 are each lipidated (S-palmitoyl cysteine).

This sequence belongs to the G-protein coupled receptor 1 family. Expressed in the brain but not in the melanoma cells.

The protein resides in the cell membrane. Receptor for MSH (alpha, beta and gamma) and ACTH. The activity of this receptor is mediated by G proteins which activate adenylate cyclase. This receptor is a possible mediator of the immunomodulation properties of melanocortins. The chain is Melanocortin receptor 5 (MC5R) from Homo sapiens (Human).